The primary structure comprises 98 residues: Toxin ParE1 (98 aa).

The protein belongs to the RelE toxin family.

Toxic component of a type II toxin-antitoxin (TA) system. Its toxic effect is neutralized by coexpression with cognate antitoxin ParD1. The chain is Toxin ParE1 (parE1) from Mycobacterium tuberculosis (strain CDC 1551 / Oshkosh).